Here is a 68-residue protein sequence, read N- to C-terminus: ATP synthase F(0) complex subunit 8 (68 aa).

The chain crosses the membrane as a helical span at residues 8–24 (VWPTIITSMLLTLFLLM). At Lys-54 the chain carries N6-acetyllysine; alternate. N6-succinyllysine; alternate is present on Lys-54. The residue at position 57 (Lys-57) is an N6-acetyllysine.

The protein belongs to the ATPase protein 8 family. As to quaternary structure, component of the ATP synthase complex composed at least of ATP5F1A/subunit alpha, ATP5F1B/subunit beta, ATP5MC1/subunit c (homooctomer), MT-ATP6/subunit a, MT-ATP8/subunit 8, ATP5ME/subunit e, ATP5MF/subunit f, ATP5MG/subunit g, ATP5MK/subunit k, ATP5MJ/subunit j, ATP5F1C/subunit gamma, ATP5F1D/subunit delta, ATP5F1E/subunit epsilon, ATP5PF/subunit F6, ATP5PB/subunit b, ATP5PD/subunit d, ATP5PO/subunit OSCP. ATP synthase complex consists of a soluble F(1) head domain (subunits alpha(3) and beta(3)) - the catalytic core - and a membrane F(0) domain - the membrane proton channel (subunits c, a, 8, e, f, g, k and j). These two domains are linked by a central stalk (subunits gamma, delta, and epsilon) rotating inside the F1 region and a stationary peripheral stalk (subunits F6, b, d, and OSCP). Interacts with PRICKLE3.

Its subcellular location is the mitochondrion membrane. Subunit 8, of the mitochondrial membrane ATP synthase complex (F(1)F(0) ATP synthase or Complex V) that produces ATP from ADP in the presence of a proton gradient across the membrane which is generated by electron transport complexes of the respiratory chain. ATP synthase complex consist of a soluble F(1) head domain - the catalytic core - and a membrane F(1) domain - the membrane proton channel. These two domains are linked by a central stalk rotating inside the F(1) region and a stationary peripheral stalk. During catalysis, ATP synthesis in the catalytic domain of F(1) is coupled via a rotary mechanism of the central stalk subunits to proton translocation. In vivo, can only synthesize ATP although its ATP hydrolase activity can be activated artificially in vitro. Part of the complex F(0) domain. In Symphalangus syndactylus (Siamang), this protein is ATP synthase F(0) complex subunit 8.